Here is a 479-residue protein sequence, read N- to C-terminus: Long-chain alcohol oxidase (479 aa).

One can recognise an FAD-binding PCMH-type domain in the interval 14–183 (QILRPSAAYT…LAVRIRCREQ (170 aa)). The residue at position 49 (histidine 49) is a Pros-8alpha-FAD histidine. FAD contacts are provided by residues threonine 113, glycine 116, 120–123 (TGTH), and isoleucine 173. The chain crosses the membrane as a helical span at residues 241–258 (LYWLGTMDYGLILQILFL). FAD-binding residues include arginine 369 and histidine 425.

It belongs to the oxygen-dependent FAD-linked oxidoreductase family. It depends on FAD as a cofactor.

The protein localises to the cell membrane. It catalyses the reaction a long-chain primary fatty alcohol + O2 = a long-chain fatty aldehyde + H2O2. The catalysed reaction is dodecan-1-ol + O2 = dodecanal + H2O2. The enzyme catalyses tetradecan-1-ol + O2 = tetradecanal + H2O2. It carries out the reaction octan-1-ol + O2 = octanal + H2O2. It catalyses the reaction decan-1-ol + O2 = decanal + H2O2. Its pathway is lipid metabolism; fatty acid metabolism. Its function is as follows. In vitro catalyzes the oxidation of a range of fatty alcohols having a carbon chain length of six and above, with a reduction of O2 to H2O2. Shows the highest activity with 1-dodecanol. Is likely involved in lipid metabolism. The polypeptide is Long-chain alcohol oxidase (Uncultured marine euryarchaeote).